The following is a 353-amino-acid chain: Outer membrane protein P2 (353 aa).

Residues 1–20 (MKKTLAALIVGAFAASAANA) form the signal peptide.

It belongs to the Gram-negative porin family. Homotrimer.

It is found in the cell outer membrane. Forms pores that allow passive diffusion of small molecules across the outer membrane. The protein is Outer membrane protein P2 (ompP2) of Haemophilus influenzae.